Consider the following 308-residue polypeptide: MNHFLDIHKTDTAELRQMMDSAHAMKAARKGRPKGQLDEDQPLAGRMVALIFEKPSTRTRVSFDVGVRQMGGQTMVLSGKEMQLGHGETIADTARVLSRYVDLIMIRTFEEATLLEMAEHATVPVINGLTNRTHPCQIMADVMTYEEHRGPIAGRKVVWAGDGNNVCASFLHAAGQFGFDFTFTGPSTLDPEAEFVGYAREKGRRVSIERDPAKAVAGADLVVTDTWVSMHDPQSARERRHNQLRPYQVNEALMAQAKPDALFMHCLPAHRDDEATSAVMDGPHSVIFDEAENRLHAQKAIMRWCLGL.

Residues 56–59 (STRT), Gln-83, Arg-107, and 134–137 (HPCQ) each bind carbamoyl phosphate. L-ornithine contacts are provided by residues Asn-165, Asp-225, and 229 to 230 (SM). Residues 266-267 (CL) and Arg-294 each bind carbamoyl phosphate.

This sequence belongs to the aspartate/ornithine carbamoyltransferase superfamily. OTCase family.

It localises to the cytoplasm. The catalysed reaction is carbamoyl phosphate + L-ornithine = L-citrulline + phosphate + H(+). The protein operates within amino-acid biosynthesis; L-arginine biosynthesis; L-arginine from L-ornithine and carbamoyl phosphate: step 1/3. Reversibly catalyzes the transfer of the carbamoyl group from carbamoyl phosphate (CP) to the N(epsilon) atom of ornithine (ORN) to produce L-citrulline. This chain is Ornithine carbamoyltransferase, found in Cereibacter sphaeroides (strain ATCC 17029 / ATH 2.4.9) (Rhodobacter sphaeroides).